The following is a 258-amino-acid chain: Ditrans,polycis-undecaprenyl-diphosphate synthase ((2E,6E)-farnesyl-diphosphate specific) (258 aa).

The active site involves Asp24. Residue Asp24 participates in Mg(2+) binding. Substrate contacts are provided by residues 25 to 28 (GNGR), Trp29, Arg37, His41, and 69 to 71 (SSE). Asn72 acts as the Proton acceptor in catalysis. Residues Trp73, Arg75, Arg192, and 198–200 (RIS) each bind substrate. Glu211 is a binding site for Mg(2+).

Belongs to the UPP synthase family. In terms of assembly, homodimer. Requires Mg(2+) as cofactor.

It carries out the reaction 8 isopentenyl diphosphate + (2E,6E)-farnesyl diphosphate = di-trans,octa-cis-undecaprenyl diphosphate + 8 diphosphate. Its function is as follows. Catalyzes the sequential condensation of isopentenyl diphosphate (IPP) with (2E,6E)-farnesyl diphosphate (E,E-FPP) to yield (2Z,6Z,10Z,14Z,18Z,22Z,26Z,30Z,34E,38E)-undecaprenyl diphosphate (di-trans,octa-cis-UPP). UPP is the precursor of glycosyl carrier lipid in the biosynthesis of bacterial cell wall polysaccharide components such as peptidoglycan and lipopolysaccharide. The sequence is that of Ditrans,polycis-undecaprenyl-diphosphate synthase ((2E,6E)-farnesyl-diphosphate specific) from Xanthomonas oryzae pv. oryzae (strain KACC10331 / KXO85).